A 450-amino-acid polypeptide reads, in one-letter code: N-lysine methyltransferase SETD6 (450 aa).

A compositionally biased stretch (basic residues) spans 1–10 (MATQAKRRRV). The interval 1–20 (MATQAKRRRVAGPAGSDDDP) is disordered. In terms of domain architecture, SET spans 39 to 263 (PKVAVSRQGT…KGHEIFNTYG (225 aa)). Lys-40 carries the N6-methylated lysine; by autocatalysis modification. Residue 50-52 (AGY) coordinates S-adenosyl-L-methionine. Trp-99 serves as a coordination point for substrate. Lys-156 is modified (N6-methylated lysine; by autocatalysis). Tyr-200 is an S-adenosyl-L-methionine binding site. Substrate contacts are provided by Ser-201 and Gln-203. S-adenosyl-L-methionine is bound by residues 228-229 (NH) and Tyr-274. Lys-349 carries the N6-methylated lysine; by autocatalysis modification.

Belongs to the class V-like SAM-binding methyltransferase superfamily. Histone-lysine methyltransferase family. SETD6 subfamily. In terms of assembly, monomer, homodimer and homotrimer; these structures are stabilized in the presence of S-adenosyl-L-methionine (SAM). Post-translationally, automethylated.

The protein resides in the nucleus. The catalysed reaction is L-lysyl-[protein] + S-adenosyl-L-methionine = N(6)-methyl-L-lysyl-[protein] + S-adenosyl-L-homocysteine + H(+). It carries out the reaction L-lysyl(8)-[histone H2AZ] + S-adenosyl-L-methionine = N(6)-methyl-L-lysyl(8)-[histone H2AZ] + S-adenosyl-L-homocysteine + H(+). Functionally, protein-lysine N-methyltransferase. Monomethylates 'Lys-310' of the RELA subunit of NF-kappa-B complex, leading to down-regulation of NF-kappa-B transcription factor activity. Monomethylates 'Lys-8' of H2AZ (H2AZK8me1). Required for the maintenance of embryonic stem cell self-renewal. Methylates PAK4. In Bos taurus (Bovine), this protein is N-lysine methyltransferase SETD6 (SETD6).